We begin with the raw amino-acid sequence, 651 residues long: Acetyl-coenzyme A synthetase (651 aa).

Residues 191-194, Thr-311, and Asn-335 each bind CoA; that span reads RGGK. Residues 387–389, 411–416, Asp-500, and Arg-515 contribute to the ATP site; these read GEP and DTWWQT. Residue Ser-523 coordinates CoA. Arg-526 is an ATP binding site. Mg(2+)-binding residues include Val-537, His-539, and Val-542. Arg-584 provides a ligand contact to CoA. Lys-609 is modified (N6-acetyllysine).

The protein belongs to the ATP-dependent AMP-binding enzyme family. Mg(2+) is required as a cofactor. In terms of processing, acetylated. Deacetylation by the SIR2-homolog deacetylase activates the enzyme.

It carries out the reaction acetate + ATP + CoA = acetyl-CoA + AMP + diphosphate. Its function is as follows. Catalyzes the conversion of acetate into acetyl-CoA (AcCoA), an essential intermediate at the junction of anabolic and catabolic pathways. AcsA undergoes a two-step reaction. In the first half reaction, AcsA combines acetate with ATP to form acetyl-adenylate (AcAMP) intermediate. In the second half reaction, it can then transfer the acetyl group from AcAMP to the sulfhydryl group of CoA, forming the product AcCoA. The protein is Acetyl-coenzyme A synthetase of Pseudomonas syringae pv. syringae (strain B728a).